A 213-amino-acid chain; its full sequence is 5-deoxy-D-ribulose 1-phosphate aldolase (213 aa).

Residues 28–29, 45–46, and 74–76 each bind substrate; these read GN, SG, and SSE. Glutamate 76 serves as the catalytic Proton donor/acceptor. Residues glutamate 76, histidine 95, histidine 97, and histidine 157 each coordinate Mn(2+).

The protein belongs to the aldolase class II family. As to quaternary structure, forms homooligomers, possibly homotetramers. It depends on Mn(2+) as a cofactor.

It carries out the reaction 5-deoxy-D-ribulose 1-phosphate = dihydroxyacetone phosphate + acetaldehyde. It functions in the pathway carbohydrate degradation. In terms of biological role, catalyzes the cleavage of 5-deoxy-D-ribulose 1-phosphate to yield dihydroxyacetone phosphate (DHAP) and acetaldehyde, as part of a 5-deoxyribose salvage pathway that recycles this toxic radical SAM enzyme by-product to mainstream metabolites. Is also able to catalyze the reverse reaction, using several aldehydes as substrate, with acetaldehyde being the preferred substrate. The polypeptide is 5-deoxy-D-ribulose 1-phosphate aldolase (Bacillus thuringiensis serovar kurstaki (strain ATCC 35866 / NRRL B-4488 / HD73)).